The following is a 137-amino-acid chain: Large ribosomal subunit protein uL16 (137 aa).

Belongs to the universal ribosomal protein uL16 family. As to quaternary structure, part of the 50S ribosomal subunit.

Functionally, binds 23S rRNA and is also seen to make contacts with the A and possibly P site tRNAs. This is Large ribosomal subunit protein uL16 from Streptococcus agalactiae serotype Ia (strain ATCC 27591 / A909 / CDC SS700).